The following is a 226-amino-acid chain: Large ribosomal subunit protein uL1 (226 aa).

It belongs to the universal ribosomal protein uL1 family. Part of the 50S ribosomal subunit.

In terms of biological role, binds directly to 23S rRNA. Probably involved in E site tRNA release. Its function is as follows. Protein L1 is also a translational repressor protein, it controls the translation of its operon by binding to its mRNA. This Korarchaeum cryptofilum (strain OPF8) protein is Large ribosomal subunit protein uL1.